Consider the following 358-residue polypeptide: tRNA-specific 2-thiouridylase MnmA (358 aa).

ATP contacts are provided by residues 22-29 and Phe-48; that span reads LVSGGIDS. Catalysis depends on Cys-105, which acts as the Nucleophile. Cysteines 105 and 201 form a disulfide. Gly-129 lines the ATP pocket. Residues 151–153 are interaction with tRNA; sequence KEQ. The Cysteine persulfide intermediate role is filled by Cys-201. The tract at residues 306–307 is interaction with tRNA; sequence RY.

It belongs to the MnmA/TRMU family.

The protein resides in the cytoplasm. It catalyses the reaction S-sulfanyl-L-cysteinyl-[protein] + uridine(34) in tRNA + AH2 + ATP = 2-thiouridine(34) in tRNA + L-cysteinyl-[protein] + A + AMP + diphosphate + H(+). Catalyzes the 2-thiolation of uridine at the wobble position (U34) of tRNA, leading to the formation of s(2)U34. The protein is tRNA-specific 2-thiouridylase MnmA of Desulfosudis oleivorans (strain DSM 6200 / JCM 39069 / Hxd3) (Desulfococcus oleovorans).